The primary structure comprises 1170 residues: Cellulose synthase-like protein D2 (1170 aa).

3 disordered regions span residues 1-48 (MASS…RRTH), 54-73 (SYSRDDLDSELGNSGDMSPE), and 269-295 (NEVDNGGGGGGGGGLGGGDGQPAEFTS). Low complexity predominate over residues 10 to 24 (RHSNSSRLSRMSYSG). The span at 273 to 288 (NGGGGGGGGGLGGGDG) shows a compositional bias: gly residues. 2 consecutive transmembrane segments (helical) span residues 311–331 (VLSPYRLLILIRMAVLGLFLA) and 341–361 (AMWLWGMSVVCELWFGLSWLL). The active site involves Asp-441. Residues 527–551 (HAREEIKAMKRQREAALDDVVEAVK) adopt a coiled-coil conformation. Asp-873 is a catalytic residue. 6 helical membrane-spanning segments follow: residues 955–975 (IFLIVYCFLPALSLFSGQFIV), 981–1001 (TFLTYLLVITLTMCMLAVLEI), 1027–1047 (LAAVLQGLLKVIAGIEISFTL), 1070–1090 (SLMIPPIVIMMVNLIAIAVGF), 1104–1124 (LLGGVFFSFWVLAHLYPFAKG), and 1134–1154 (TIVFVWSGLLAITISLLWVAI).

It belongs to the glycosyltransferase 2 family. Plant cellulose synthase-like D subfamily.

The protein localises to the golgi apparatus membrane. Thought to be a Golgi-localized beta-glycan synthase that polymerize the backbones of noncellulosic polysaccharides (hemicelluloses) of plant cell wall. This is Cellulose synthase-like protein D2 (CSLD2) from Oryza sativa subsp. japonica (Rice).